Here is a 499-residue protein sequence, read N- to C-terminus: Serine carboxypeptidase 1 (499 aa).

The first 30 residues, 1 to 30 (MARCRRRSGCTAGAALLLLLALALSGGGGA), serve as a signal peptide directing secretion. 3 cysteine pairs are disulfide-bonded: Cys-92–Cys-388, Cys-256–Cys-268, and Cys-291–Cys-355. N-linked (GlcNAc...) asparagine glycosylation is present at Asn-148. The active site involves Ser-188. The N-linked (GlcNAc...) asparagine glycan is linked to Asn-262. The propeptide at 297-351 (IKEVNLQNSKLPQSFKDLGTTNKPFPVRTRMLGRAWPLRAPVKAGRVPSWQEVAS) is linker peptide. Asn-407 is a glycosylation site (N-linked (GlcNAc...) asparagine). Residues Asp-423 and His-476 contribute to the active site. Positions 497–499 (SKL) match the Microbody targeting signal motif.

It belongs to the peptidase S10 family. In terms of assembly, carboxypeptidase I is a dimer, where each monomer is composed of two chains linked by disulfide bonds. The linker peptide is endoproteolytically excised during enzyme maturation.

Its subcellular location is the secreted. It carries out the reaction Release of a C-terminal amino acid with broad specificity.. In terms of biological role, may be involved in the degradation of small peptides (2-5 residues) or in the degradation of storage proteins in the embryo. The protein is Serine carboxypeptidase 1 (CBP1) of Hordeum vulgare (Barley).